The chain runs to 97 residues: Defensin-A2 (97 aa).

Positions 1–19 (MRTLSLLLALLFLAAQTLA) are cleaved as a signal peptide. A propeptide spanning residues 20 to 61 (QPIDEGAEEVITEEPEITETQDPTTIMLIERGIGGDSTDATR) is cleaved from the precursor. 3 cysteine pairs are disulfide-bonded: cysteine 66/cysteine 93, cysteine 68/cysteine 82, and cysteine 72/cysteine 92. The propeptide occupies 96 to 97 (TS).

The protein belongs to the alpha-defensin family. As to expression, highly expressed in intestine, expressed at lower levels in spleen, and at very low levels in kidney and lung.

The protein localises to the secreted. Functionally, has antimicrobial activity. This Ornithorhynchus anatinus (Duckbill platypus) protein is Defensin-A2.